The chain runs to 353 residues: Fe(3+) ions import ATP-binding protein FbpC 1 (353 aa).

One can recognise an ABC transporter domain in the interval 9 to 239; the sequence is VVFRNICKQF…PASAFIADFM (231 aa). Position 41–48 (41–48) interacts with ATP; that stretch reads GPSGCGKT.

The protein belongs to the ABC transporter superfamily. Fe(3+) ion importer (TC 3.A.1.10) family. As to quaternary structure, the complex is composed of two ATP-binding proteins (FbpC), two transmembrane proteins (FbpB) and a solute-binding protein (FbpA).

The protein resides in the cell inner membrane. The catalysed reaction is Fe(3+)(out) + ATP + H2O = Fe(3+)(in) + ADP + phosphate + H(+). In terms of biological role, part of the ABC transporter complex FbpABC involved in Fe(3+) ions import. Responsible for energy coupling to the transport system. The protein is Fe(3+) ions import ATP-binding protein FbpC 1 of Rhizobium meliloti (strain 1021) (Ensifer meliloti).